The chain runs to 141 residues: Putative ankyrin repeat protein FPV223 (141 aa).

4 ANK repeats span residues 21-50, 54-83, 85-114, and 118-140; these read SGRT…DVFK, CMCT…YIVK, RNKL…NENS, and DGLT…MFVI.

This Vertebrata (FPV) protein is Putative ankyrin repeat protein FPV223.